We begin with the raw amino-acid sequence, 157 residues long: Transcriptional repressor NrdR (157 aa).

Residues methionine 1–glycine 22 form a disordered region. A zinc finger lies at cysteine 3 to cysteine 34. Positions serine 8–arginine 17 are enriched in polar residues. Residues leucine 49–arginine 136 form the ATP-cone domain.

This sequence belongs to the NrdR family. Zn(2+) serves as cofactor.

Negatively regulates transcription of bacterial ribonucleotide reductase nrd genes and operons by binding to NrdR-boxes. This chain is Transcriptional repressor NrdR, found in Deinococcus radiodurans (strain ATCC 13939 / DSM 20539 / JCM 16871 / CCUG 27074 / LMG 4051 / NBRC 15346 / NCIMB 9279 / VKM B-1422 / R1).